Reading from the N-terminus, the 509-residue chain is 3-isopropylmalate dehydratase large subunit, chloroplastic (509 aa).

Low complexity predominate over residues 1–24 (MASVISSSPFLCKSSSKSDLGISS). The interval 1–25 (MASVISSSPFLCKSSSKSDLGISSF) is disordered. A chloroplast-targeting transit peptide spans 1–47 (MASVISSSPFLCKSSSKSDLGISSFPKSSQISIHRCQKKSISRKIVS). C376, C445, and C448 together coordinate [4Fe-4S] cluster.

The protein belongs to the aconitase/IPM isomerase family. Heterodimer of the large LEUC/IIL1 subunit and the small LEUD (SSU1, SSU2 or SSU3) subunits. [4Fe-4S] cluster serves as cofactor. In terms of tissue distribution, expressed in roots, leaves, stems and flowers. Expressed at low levels in siliques.

It localises to the plastid. The protein resides in the chloroplast stroma. The catalysed reaction is (2R,3S)-3-isopropylmalate = (2S)-2-isopropylmalate. It carries out the reaction a 2-(omega-methylsulfanyl)alkylmalate = a 2-(omega-methylsulfanyl)alkylmaleate + H2O. The enzyme catalyses 2-(3-methylsulfanyl)propylmalate = 2-(2-methylsulfanyl)propylmaleate + H2O. It catalyses the reaction a 3-(omega-methylsulfanyl)alkylmalate = a 2-(omega-methylsulfanyl)alkylmaleate + H2O. The catalysed reaction is 2-(2-methylsulfanyl)ethylmalate = 2-(2-methylsulfanyl)ethylmaleate + H2O. It carries out the reaction 3-(2-methylsulfanyl)ethylmalate = 2-(2-methylsulfanyl)ethylmaleate + H2O. The enzyme catalyses 3-(3-methylsulfanyl)propylmalate = 2-(2-methylsulfanyl)propylmaleate + H2O. The protein operates within amino-acid biosynthesis; L-leucine biosynthesis; L-leucine from 3-methyl-2-oxobutanoate: step 2/4. In terms of biological role, catalyzes the isomerization between 2-isopropylmalate and 3-isopropylmalate, via the formation of 2-isopropylmaleate. Functions in both the biosynthesis of leucine and in the methionine chain elongation pathway of aliphatic glucosinolate formation. In Arabidopsis thaliana (Mouse-ear cress), this protein is 3-isopropylmalate dehydratase large subunit, chloroplastic.